Here is a 415-residue protein sequence, read N- to C-terminus: UDP-galactose transporter homolog 1 (415 aa).

The disordered stretch occupies residues 1 to 39; it reads MHLVPEGSESMSTQQNGSAQKPVTLNGSASTKGQAPEAP. Residues 9–33 are compositionally biased toward polar residues; the sequence is ESMSTQQNGSAQKPVTLNGSASTKG. 2 N-linked (GlcNAc...) asparagine glycosylation sites follow: N16 and N26. Transmembrane regions (helical) follow at residues 45–65, 95–115, 132–152, 161–181, and 185–205; these read LIQLAICVLGIYASFLSWGVL, IVLNTIQSTFAAITGFLYLYF, ILFPLLLVSISSSLASPFGYA, TFILAKSCKLLPVMFLHLTIF, and YPLYKYGVVLLVTLGVATFTL. N221 is a glycosylation site (N-linked (GlcNAc...) asparagine). Residues 223 to 243 traverse the membrane as a helical segment; that stretch reads SGSSLYGIFLLSINLLLDGLT. An N-linked (GlcNAc...) asparagine glycan is attached at N244. The next 3 helical transmembrane spans lie at 281 to 301, 325 to 345, and 368 to 388; these read LLVMPHLSSTGALHALLPIPI, NVLGFAACGAIGQLFIFYTLS, and VFWFGHTLSAGQWLGIGLVFG.

It belongs to the nucleotide-sugar transporter family. SLC35B subfamily.

It is found in the endoplasmic reticulum membrane. In terms of biological role, may be involved in specific transport of UDP-Gal from the cytosol to the Golgi lumen. Involved in the maintenance of optimal conditions for the folding of secretory pathway proteins in the endoplasmic reticulum. This is UDP-galactose transporter homolog 1 (hut1) from Aspergillus fumigatus (strain ATCC MYA-4609 / CBS 101355 / FGSC A1100 / Af293) (Neosartorya fumigata).